A 265-amino-acid polypeptide reads, in one-letter code: Undecaprenyl-diphosphatase (265 aa).

A run of 8 helical transmembrane segments spans residues 1–21 (MDWF…FLPI), 39–59 (QGLA…MMYY), 83–103 (LKLG…GFLG), 114–134 (ALVI…SDAF), 144–164 (LGVA…IPGT), 188–208 (SFLL…KDLI), 218–238 (MMAL…VFFI), and 244–264 (VGML…LFWL).

Belongs to the UppP family.

Its subcellular location is the cell inner membrane. The enzyme catalyses di-trans,octa-cis-undecaprenyl diphosphate + H2O = di-trans,octa-cis-undecaprenyl phosphate + phosphate + H(+). Catalyzes the dephosphorylation of undecaprenyl diphosphate (UPP). Confers resistance to bacitracin. The polypeptide is Undecaprenyl-diphosphatase (Alcanivorax borkumensis (strain ATCC 700651 / DSM 11573 / NCIMB 13689 / SK2)).